We begin with the raw amino-acid sequence, 425 residues long: Formyl-CoA:oxalate CoA-transferase (425 aa).

CoA is bound by residues 17 to 18, R38, 72 to 75, 96 to 98, R104, and 136 to 139; these read QS, LDTK, NFG, and KVYE. Residue D168 is the Nucleophile of the active site. 247 to 249 is a binding site for substrate; the sequence is GGQ.

The protein belongs to the CoA-transferase III family. Frc subfamily. In terms of assembly, homodimer.

The catalysed reaction is formyl-CoA + oxalate = oxalyl-CoA + formate. It functions in the pathway metabolic intermediate degradation; oxalate degradation; CO(2) and formate from oxalate: step 1/2. In terms of biological role, involved in the catabolism of oxalate and in the adapatation to low pH via the induction of the oxalate-dependent acid tolerance response (ATR). Catalyzes the transfer of the CoA moiety from formyl-CoA to oxalate. The sequence is that of Formyl-CoA:oxalate CoA-transferase from Rhodopseudomonas palustris (strain BisA53).